The sequence spans 425 residues: Amidase 1 (425 aa).

The residue at position 2 (alanine 2) is an N-acetylalanine. Active-site charge relay system residues include lysine 36 and serine 113. The Acyl-ester intermediate role is filled by serine 137.

This sequence belongs to the amidase family. In terms of tissue distribution, expressed in cotyledons, leaves and flower buds. Lower levels in roots, stems and siliques.

It localises to the cytoplasm. Its subcellular location is the nucleus. The protein resides in the nucleoplasm. The catalysed reaction is a monocarboxylic acid amide + H2O = a monocarboxylate + NH4(+). The enzyme catalyses indole-3-acetamide + H2O = (indol-3-yl)acetate + NH4(+). It carries out the reaction 2-phenylacetamide + H2O = 2-phenylacetate + NH4(+). It catalyses the reaction L-asparagine + H2O = L-aspartate + NH4(+). The catalysed reaction is 1-naphthaleneacetamide + H2O = 1-naphthaleneacetate + NH4(+). Inhibited by phenylmethylsulfonyl fluoride (PMSF). Amidase involved in auxin biosynthesis. Converts indole-3-acetamide to indole-3-acetate. Converts phenyl-2-acetamide (PAM) to phenyl-2-acetate. Substrate preference is PAM &gt; IAM. Can also use L-asparagine and 1-naphtalene-acetamide as substrates, but not indole-3-acetonitrile or indole-3-acetyl-L-aspartic acid. The chain is Amidase 1 from Arabidopsis thaliana (Mouse-ear cress).